We begin with the raw amino-acid sequence, 859 residues long: Cadherin-related family member 1 (859 aa).

A signal peptide spans 1-21 (MRRGPQVALVLGLLCIYLAQA). The Extracellular portion of the chain corresponds to 22–701 (NFAPHFFDNG…LIQTKDNPMK (680 aa)). 6 Cadherin domains span residues 36 to 135 (NGNM…APRF), 136 to 247 (LQEP…APIF), 248 to 354 (VGTP…PPTF), 360 to 473 (PQNK…VPKF), 474 to 577 (TSHY…YPQF), and 569 to 691 (DVND…MAAF). N-linked (GlcNAc...) asparagine glycosylation is found at Asn58 and Asn89. Residues Asn288 and Asn297 are each glycosylated (N-linked (GlcNAc...) asparagine). The helical transmembrane segment at 702–722 (AVGVLAGVMAIVVAITVLIST) threads the bilayer. At 723 to 859 (ATFWRNKKSN…KKSLGNKAYV (137 aa)) the chain is on the cytoplasmic side. The interval 789-859 (PPRAPALPPP…KKSLGNKAYV (71 aa)) is disordered. Pro residues predominate over residues 790–800 (PRAPALPPPPK). Residues 802-816 (ASSTVAQQTVPTVSG) show a composition bias toward polar residues. Over residues 817–827 (SLTPQPSQQLP) the composition is skewed to low complexity.

As to quaternary structure, interacts with PROM1. In terms of processing, undergoes proteolytic cleavage; produces a soluble 95 kDa N-terminal fragment and a 25 kDa cell-associated C-terminal fragment. As to expression, expressed in the retina. Strongly expressed by the mitral and tufted cells in the main and accessory olfactory bulbs. Also expressed in the septum and olfactory cortex. Weakly expressed in the triangular septal nucleus and piriform cortex.

It localises to the cell membrane. Functionally, potential calcium-dependent cell-adhesion protein. May be required for the structural integrity of the outer segment (OS) of photoreceptor cells. In Rattus norvegicus (Rat), this protein is Cadherin-related family member 1 (Cdhr1).